The chain runs to 151 residues: uncharacterized protein (151 aa).

2 BON domains span residues D2–K68 and I78–H146.

This is an uncharacterized protein from Anaplasma centrale.